Reading from the N-terminus, the 445-residue chain is DNA repair protein RadA (445 aa).

The segment at cysteine 10 to cysteine 27 adopts a C4-type zinc-finger fold. Glycine 90–serine 97 lines the ATP pocket. The short motif at lysine 249–glycine 253 is the RadA KNRFG motif element. The interval glutamate 348–lysine 445 is lon-protease-like.

The protein belongs to the RecA family. RadA subfamily.

Functionally, DNA-dependent ATPase involved in processing of recombination intermediates, plays a role in repairing DNA breaks. Stimulates the branch migration of RecA-mediated strand transfer reactions, allowing the 3' invading strand to extend heteroduplex DNA faster. Binds ssDNA in the presence of ADP but not other nucleotides, has ATPase activity that is stimulated by ssDNA and various branched DNA structures, but inhibited by SSB. Does not have RecA's homology-searching function. This Rickettsia typhi (strain ATCC VR-144 / Wilmington) protein is DNA repair protein RadA.